The primary structure comprises 353 residues: Chorismate synthase (353 aa).

NADP(+)-binding residues include arginine 48 and arginine 54. Residues 125 to 127, 238 to 239, glycine 278, 293 to 297, and arginine 319 each bind FMN; these read RSS, NA, and KPTSS.

Belongs to the chorismate synthase family. Homotetramer. It depends on FMNH2 as a cofactor.

The enzyme catalyses 5-O-(1-carboxyvinyl)-3-phosphoshikimate = chorismate + phosphate. Its pathway is metabolic intermediate biosynthesis; chorismate biosynthesis; chorismate from D-erythrose 4-phosphate and phosphoenolpyruvate: step 7/7. In terms of biological role, catalyzes the anti-1,4-elimination of the C-3 phosphate and the C-6 proR hydrogen from 5-enolpyruvylshikimate-3-phosphate (EPSP) to yield chorismate, which is the branch point compound that serves as the starting substrate for the three terminal pathways of aromatic amino acid biosynthesis. This reaction introduces a second double bond into the aromatic ring system. The protein is Chorismate synthase of Bordetella bronchiseptica (strain ATCC BAA-588 / NCTC 13252 / RB50) (Alcaligenes bronchisepticus).